The following is a 195-amino-acid chain: Small ribosomal subunit protein uS4B (195 aa).

The 75-residue stretch at Arg-107–Ala-181 folds into the S4 RNA-binding domain. The tract at residues Thr-161–Glu-195 is disordered. Lys-180 is covalently cross-linked (Glycyl lysine isopeptide (Lys-Gly) (interchain with G-Cter in ubiquitin)). Ser-184 is subject to Phosphoserine.

Belongs to the universal ribosomal protein uS4 family. Component of the small ribosomal subunit (SSU). Mature yeast ribosomes consist of a small (40S) and a large (60S) subunit. The 40S small subunit contains 1 molecule of ribosomal RNA (18S rRNA) and 33 different proteins (encoded by 57 genes). The large 60S subunit contains 3 rRNA molecules (25S, 5.8S and 5S rRNA) and 46 different proteins (encoded by 81 genes). Interacts with snoRNA U3. uS11 interacts with MPP10. Component of the ribosomal small subunit (SSU) processome composed of at least 40 protein subunits and snoRNA U3.

It is found in the cytoplasm. It localises to the nucleus. The protein resides in the nucleolus. Its function is as follows. Component of the ribosome, a large ribonucleoprotein complex responsible for the synthesis of proteins in the cell. The small ribosomal subunit (SSU) binds messenger RNAs (mRNAs) and translates the encoded message by selecting cognate aminoacyl-transfer RNA (tRNA) molecules. The large subunit (LSU) contains the ribosomal catalytic site termed the peptidyl transferase center (PTC), which catalyzes the formation of peptide bonds, thereby polymerizing the amino acids delivered by tRNAs into a polypeptide chain. The nascent polypeptides leave the ribosome through a tunnel in the LSU and interact with protein factors that function in enzymatic processing, targeting, and the membrane insertion of nascent chains at the exit of the ribosomal tunnel. uS4 is involved in nucleolar processing of pre-18S ribosomal RNA and ribosome assembly. This chain is Small ribosomal subunit protein uS4B, found in Saccharomyces cerevisiae (strain ATCC 204508 / S288c) (Baker's yeast).